Here is a 1836-residue protein sequence, read N- to C-terminus: U3 small nucleolar RNA-associated protein 10 (1836 aa).

The HEAT 1 repeat unit spans residues 245–283; sequence EVVGFLLLPSKYETLRNIDVDTRLTAYSIIAVLASIIPI. The segment at 453-473 is disordered; it reads SNSSVRDSDDVEFDAGEEDNN. The span at 461–473 shows a compositional bias: acidic residues; sequence DDVEFDAGEEDNN. HEAT repeat units follow at residues 585 to 623 and 813 to 850; these read PLDL…TTTS and VENR…DQDL. Residues 863-883 form a disordered region; the sequence is QIPEQGPAKRRRRSSSSTKQA. 2 helical membrane-spanning segments follow: residues 998 to 1018 and 1085 to 1105; these read LLLV…HSVM and LFTY…LLFL. HEAT repeat units follow at residues 1333–1372, 1749–1787, and 1790–1828; these read ESVL…KFGA, ETLV…KMGE, and LTYL…NVLG.

It belongs to the HEATR1/UTP10 family. Component of the ribosomal small subunit (SSU) processome.

The protein localises to the nucleus. It is found in the nucleolus. Its subcellular location is the membrane. Its function is as follows. Involved in nucleolar processing of pre-18S ribosomal RNA. Involved in ribosome biosynthesis. This is U3 small nucleolar RNA-associated protein 10 from Scheffersomyces stipitis (strain ATCC 58785 / CBS 6054 / NBRC 10063 / NRRL Y-11545) (Yeast).